Consider the following 276-residue polypeptide: MAIKTYKPYTPSRRYITGLSSEDITAKPSVRSLLVKLPAHAGRNSYGRITSRHKEAGAKKLYRIIDFKRRKFGIEGKVEAIEYDPYRNCRIALIAYKDGEKRYILQPRGLSVGDIVAAAESGLDIKPGNAMKLKNIPVGTIVHNVELKPGKGGQMIRSAGAYAQLMGKEEKYVILRLASGEMRQVLAECMASIGEVGNEEWANVTIGKAGRNRHRGIRPQTRGSAMNPVDHPHGGGEGKKNSGRHPVTPWGKPTKGAKTRRKKASDKLIISRRKGK.

The disordered stretch occupies residues 210–276; that stretch reads GRNRHRGIRP…KLIISRRKGK (67 aa). Positions 230–240 are enriched in basic and acidic residues; sequence DHPHGGGEGKK. Residues 255–276 show a composition bias toward basic residues; sequence KGAKTRRKKASDKLIISRRKGK.

This sequence belongs to the universal ribosomal protein uL2 family. Part of the 50S ribosomal subunit. Forms a bridge to the 30S subunit in the 70S ribosome.

One of the primary rRNA binding proteins. Required for association of the 30S and 50S subunits to form the 70S ribosome, for tRNA binding and peptide bond formation. It has been suggested to have peptidyltransferase activity; this is somewhat controversial. Makes several contacts with the 16S rRNA in the 70S ribosome. In Campylobacter jejuni subsp. jejuni serotype O:6 (strain 81116 / NCTC 11828), this protein is Large ribosomal subunit protein uL2.